The sequence spans 368 residues: Protein ALTERED XYLOGLUCAN 9 (368 aa).

Over 1 to 32 (MLGAIHLGVLAACFVLFVPMAMAGWHLSRNKM) the chain is Cytoplasmic. A helical transmembrane segment spans residues 33–53 (LFFSGALFISLAVCVHLTPYF). The Lumenal segment spans residues 54 to 368 (PSVSDIVASV…ALLIESHQSL (315 aa)). 3 N-linked (GlcNAc...) asparagine glycosylation sites follow: asparagine 99, asparagine 137, and asparagine 235.

It is found in the golgi apparatus membrane. Component of the plant cell wall polysaccharide acetylation pathway. Does not directly catalyze O-acetylation of xyloglucan but exhibits weak acetylesterase activity in vitro. This is Protein ALTERED XYLOGLUCAN 9 from Arabidopsis thaliana (Mouse-ear cress).